A 154-amino-acid chain; its full sequence is Ribosome maturation factor RimP (154 aa).

This sequence belongs to the RimP family.

Its subcellular location is the cytoplasm. Functionally, required for maturation of 30S ribosomal subunits. This Thioalkalivibrio sulfidiphilus (strain HL-EbGR7) protein is Ribosome maturation factor RimP.